A 1704-amino-acid polypeptide reads, in one-letter code: ABC transporter ced-7 (1704 aa).

A helical transmembrane segment spans residues 23-43 (VWTLFELIIPCLLLGPLVYLV). Residues asparagine 126 and asparagine 145 are each glycosylated (N-linked (GlcNAc...) asparagine). Helical transmembrane passes span 256-276 (AFID…VIHI), 306-326 (VVMA…PLTF), and 334-354 (AALI…GAFV). N-linked (GlcNAc...) asparagine glycosylation is present at asparagine 359. Transmembrane regions (helical) follow at residues 362–382 (NSAI…SYKL) and 389–409 (ISSC…AVEA). 2 N-linked (GlcNAc...) asparagine glycosylation sites follow: asparagine 421 and asparagine 427. Residues 436–456 (GWALVMMIVDILWMSIGALVV) traverse the membrane as a helical segment. Asparagine 481 carries N-linked (GlcNAc...) asparagine glycosylation. The interval 511-536 (NPMASTSLNPPNADSDSLLEGSTEAD) is disordered. A compositionally biased stretch (polar residues) spans 512-525 (PMASTSLNPPNADS). Positions 546–777 (IIVRNLVKIW…FGTGYLLTVV (232 aa)) constitute an ABC transporter 1 domain. An ATP-binding site is contributed by 580-587 (GHNGAGKS). Asparagine 678, asparagine 727, and asparagine 899 each carry an N-linked (GlcNAc...) asparagine glycan. Composition is skewed to polar residues over residues 888–902 (RQNS…NASE) and 911–921 (DTQSSTKSADS). The tract at residues 888 to 933 (RQNSRISHNSRNASEPSLKPAGYDTQSSTKSADSYQKLMDSQARGP) is disordered. A helical membrane pass occupies residues 963 to 983 (LFTQVLIPIILLGLVGSLTTL). N-linked (GlcNAc...) asparagine glycosylation is found at asparagine 986, asparagine 1012, and asparagine 1045. The next 7 membrane-spanning stretches (helical) occupy residues 1126–1146 (LAPM…MFLI), 1153–1173 (FAHQ…ASLI), 1176–1196 (GILY…FHWM), 1201–1221 (AIVI…IYAV), 1234–1254 (LLII…FLIF), 1266–1286 (ILVN…AIIT), and 1311–1331 (LMGT…FKFV). The region spanning 1379–1603 (LVIKDLTKTF…YGNNYTMTLS (225 aa)) is the ABC transporter 2 domain. Residue 1411 to 1418 (GVNGAGKT) participates in ATP binding. 2 N-linked (GlcNAc...) asparagine glycosylation sites follow: asparagine 1597 and asparagine 1632.

This sequence belongs to the ABC transporter superfamily. ABCA family. In terms of tissue distribution, ubiquitous in embryos. Expressed in larval germline precursors. Expression in larvae and adults is seen in amphid sheath cells, pharyngeal-intestinal valve and phasmid sheath cells. Low levels of expression are also seen in gonadal sheath cells.

The protein localises to the membrane. In terms of biological role, functions in the engulfment of cell corpses during embryonic programmed cell death to translocate molecules that mediate homotypic adhesion between cell surfaces of the dying and engulfing cells. This chain is ABC transporter ced-7 (ced-7), found in Caenorhabditis elegans.